Here is an 803-residue protein sequence, read N- to C-terminus: Volume-regulated anion channel subunit LRRC8C (803 aa).

The Cytoplasmic portion of the chain corresponds to 1-22; that stretch reads MIPVTEFRQFSEQQPAFRVLKP. The helical transmembrane segment at 23–43 threads the bilayer; that stretch reads WWDVFTDYLSVAMLMIGVFGC. Residues 44–125 are Extracellular-facing; sequence TLQVMQDKII…YERALHWYAK (82 aa). Intrachain disulfides connect cysteine 54–cysteine 308 and cysteine 115–cysteine 293. N-linked (GlcNAc...) asparagine glycosylation is found at asparagine 64 and asparagine 70. Residues 126–146 traverse the membrane as a helical segment; sequence YFPYLVLIHTLVFMLCSNFWF. Topologically, residues 147-266 are cytoplasmic; that stretch reads KFPGSSSKIE…ILYAMYVRQT (120 aa). Residues 177–211 form a disordered region; it reads EVSGEDSEEKDNRKNNMNRSNTIQSGPEGSLVKSQ. The segment covering 191–211 has biased composition (polar residues); the sequence is NNMNRSNTIQSGPEGSLVKSQ. Serine 212 and serine 215 each carry phosphoserine. The helical transmembrane segment at 267 to 287 threads the bilayer; the sequence is VLKVIKFLIIIAYNSALVSKV. Over 288–320 the chain is Extracellular; the sequence is QFTVDCNVDIQDMTGYKNFSCNHTMAHLFSKLS. The helical transmembrane segment at 321–341 threads the bilayer; it reads FCYLCFVSIYGLTCLYTLYWL. Over 342-803 the chain is Cytoplasmic; that stretch reads FYRSLREYSF…SDVREQMKAD (462 aa). LRR repeat units lie at residues 397 to 420, 421 to 443, 446 to 466, 467 to 488, 490 to 513, 515 to 537, 541 to 563, 565 to 587, 588 to 611, 613 to 635, 637 to 659, 660 to 682, 684 to 705, 706 to 728, 730 to 751, 752 to 774, and 776 to 799; these read ENKL…KLQT, NAHN…VFEI, LQSL…IAQL, DNLQ…ALSF, KENL…MYGL, NLEE…TLES, LKSL…VVDV, SHLQ…NLKK, MTNL…VFSL, SLQE…SFQH, RKLT…IKKL, TSLE…LFLC, KIRY…IGVL, QSLQ…LYFC, KLKT…IGNL, LFLS…LGDC, and ALKR…VREQ.

The protein belongs to the LRRC8 family. Heterohexamer; oligomerizes with other LRRC8 proteins (LRRC8A, LRRC8B, LRRC8D and/or LRRC8E) to form a heterohexamer. Homoheptamer; inactive, likely because it is not targeted to the plasma membrane in the absence of LRRC8A. In vivo, the subunit composition may depend primarily on expression levels, and heterooligomeric channels containing various proportions of the different LRRC8 proteins may coexist.

Its subcellular location is the cell membrane. The protein resides in the endoplasmic reticulum membrane. The enzyme catalyses chloride(in) = chloride(out). It carries out the reaction iodide(out) = iodide(in). It catalyses the reaction taurine(out) = taurine(in). The catalysed reaction is 2',3'-cGAMP(out) = 2',3'-cGAMP(in). Non-essential component of the volume-regulated anion channel (VRAC, also named VSOAC channel), an anion channel required to maintain a constant cell volume in response to extracellular or intracellular osmotic changes. The VRAC channel conducts iodide better than chloride and can also conduct organic osmolytes like taurine. Plays a redundant role in the efflux of amino acids, such as aspartate and glutamate, in response to osmotic stress. The VRAC channel also mediates transport of immunoreactive cyclic dinucleotide GMP-AMP (2'-3'-cGAMP), an immune messenger produced in response to DNA virus in the cytosol. Channel activity requires LRRC8A plus at least one other family member (LRRC8B, LRRC8C, LRRC8D or LRRC8E); channel characteristics depend on the precise subunit composition. The polypeptide is Volume-regulated anion channel subunit LRRC8C (Rattus norvegicus (Rat)).